The sequence spans 233 residues: Tail needle protein gp26 (233 aa).

The tract at residues 2 to 60 (ADPSLNNPVVIQATRLDASILPRNVFSKSYLLYVIAQGTDVGAIAGKANEAGQGAYDAQ) is interaction with tail hub protein gp10. Trimerization heptad repeat repeat units lie at residues 61 to 67 (VKNDEQD), 70 to 76 (LADHEAR), 77 to 83 (IKQLRID), 84 to 90 (VDDHESR), 91 to 97 (ITANTKA), 98 to 104 (ITALNVR), 105 to 111 (VTTAEGE), 112 to 118 (IASLQTN), 119 to 125 (VSALDGR), 126 to 132 (VTTAENN), and 133 to 139 (ISALQAD). Residues 61–139 (VKNDEQDVEL…ENNISALQAD (79 aa)) adopt a coiled-coil conformation. An inverted coiled coil region spans residues 175–233 (GWTAATGTANKGVFDADLTFAVSDTYTQSEIQAIANALITERRRTKALEDALRAHGLID). A Basic cluster motif is present at residues 216–220 (RRRTK).

It belongs to the Lederbergvirus tail needle protein family. Homotrimer. The trimer forms an elongated coiled-coil (240A x 25A). The N-terminal tip may exist in a pre-ejection extended conformation, which may fold into a trimer of hairpins only after ejection into the host. Interacts (via N-terminus) with the tail hub gp10. Interacts with the head-to-tail adapter protein gp4.

It is found in the virion. Cell-perforating component and plug protein of the phage tail machine. Together with gp4 and gp10, gp26 is required for stabilization of the condensed DNA within the capsid by plugging the hole through which the DNA enters. Host cell membrane perforation allows viral DNA ejection. The needle penetrates the host outer membrane. The needle is released and the internal head protein gp7 is ejected to form an extra-cellular channel. In Salmonella typhimurium (Bacteriophage P22), this protein is Tail needle protein gp26 (26).